The sequence spans 514 residues: Cholesterol side-chain cleavage enzyme, mitochondrial (514 aa).

Residues 1–39 constitute a mitochondrion transit peptide; the sequence is MMVSWSVCRSSLALPACGLPSARHNSSMPVVRQALSPDN. Position 458 (C458) interacts with heme.

This sequence belongs to the cytochrome P450 family. Heme is required as a cofactor. In terms of tissue distribution, in the ovary, not found in early vitellogenic follicles, barely detected in postvitellogenic follicles and abundant in post-ovulatory follicles.

It is found in the mitochondrion inner membrane. It catalyses the reaction 6 reduced [adrenodoxin] + cholesterol + 3 O2 + 6 H(+) = 4-methylpentanal + pregnenolone + 6 oxidized [adrenodoxin] + 4 H2O. It participates in lipid metabolism; C21-steroid hormone metabolism. Its function is as follows. Catalyzes the side-chain cleavage reaction of cholesterol to pregnenolone, the precursor of most steroid hormones. This Oncorhynchus mykiss (Rainbow trout) protein is Cholesterol side-chain cleavage enzyme, mitochondrial (cyp11a1).